A 180-amino-acid chain; its full sequence is Large ribosomal subunit protein uL5 (180 aa).

Belongs to the universal ribosomal protein uL5 family. In terms of assembly, part of the 50S ribosomal subunit; part of the 5S rRNA/L5/L18/L25 subcomplex. Contacts the 5S rRNA and the P site tRNA. Forms a bridge to the 30S subunit in the 70S ribosome.

Its function is as follows. This is one of the proteins that bind and probably mediate the attachment of the 5S RNA into the large ribosomal subunit, where it forms part of the central protuberance. In the 70S ribosome it contacts protein S13 of the 30S subunit (bridge B1b), connecting the 2 subunits; this bridge is implicated in subunit movement. Contacts the P site tRNA; the 5S rRNA and some of its associated proteins might help stabilize positioning of ribosome-bound tRNAs. The polypeptide is Large ribosomal subunit protein uL5 (Xanthomonas oryzae pv. oryzae (strain MAFF 311018)).